A 293-amino-acid chain; its full sequence is Probable adenylate kinase 1, chloroplastic (293 aa).

Residues Met1–Arg26 constitute a mitochondrion transit peptide. Gly70 to Thr75 lines the ATP pocket. The interval Ala90 to Val119 is NMP. Residues Thr91, Arg96, Lys117 to Val119, Gly147 to Arg150, and Gln154 each bind AMP. Residues Gly183–Asp231 are LID. ATP-binding positions include Arg184 and Asn193–Phe194. Arg228 and Arg239 together coordinate AMP.

It belongs to the adenylate kinase family.

It is found in the mitochondrion. It carries out the reaction AMP + ATP = 2 ADP. In terms of biological role, catalyzes the reversible transfer of the terminal phosphate group between ATP and AMP. Plays an important role in cellular energy homeostasis and in adenine nucleotide metabolism. This is Probable adenylate kinase 1, chloroplastic from Oryza sativa subsp. japonica (Rice).